A 589-amino-acid chain; its full sequence is PAN2-PAN3 deadenylation complex subunit pan3 (589 aa).

Positions 1–32 (MSVRKNSPASPKPTSRSRESSRSPSVTDLKDH) are disordered. Residues 34–63 (KAKRTLCRNILLYGSCKHSENGCAFRHDGP) form a C3H1-type zinc finger. The PABPC-interacting motif-2 (PAM-2) motif lies at 74–94 (YSVKKKLNAASASFQPVRALP). The segment at 201-457 (EASRQTISAL…NLELFLQNHI (257 aa)) is pseudokinase domain. Residues K255 and 302–309 (DFYPCTTT) each bind ATP. Positions 458–496 (ESFFPIMSSPYVECEKMERKISDAFQHGRFFNILCKIMF) form a coiled coil. Positions 497–589 (IIDNNRASRE…DNVYEMEINS (93 aa)) are knob domain.

This sequence belongs to the protein kinase superfamily. PAN3 family. In terms of assembly, homodimer. Forms a heterotrimer with a catalytic subunit pan2 to form the poly(A)-nuclease (PAN) deadenylation complex. Interacts (via PAM-2 motif) with poly(A)-binding protein pab1 (via PABC domain), conferring substrate specificity of the enzyme complex.

It localises to the cytoplasm. The protein localises to the nucleus. Functionally, regulatory subunit of the poly(A)-nuclease (PAN) deadenylation complex, one of two cytoplasmic mRNA deadenylases involved in mRNA turnover. PAN specifically shortens poly(A) tails of RNA and the activity is stimulated by poly(A)-binding protein pab1. PAN deadenylation is followed by rapid degradation of the shortened mRNA tails by the CCR4-NOT complex. Deadenylated mRNAs are then degraded by two alternative mechanisms, namely exosome-mediated 3'-5' exonucleolytic degradation, or deadenylation-dependent mRNA decaping and subsequent 5'-3' exonucleolytic degradation by xrn1. May also be involved in post-transcriptional maturation of mRNA poly(A) tails. ppk26/pan3 acts as a positive regulator for PAN activity, recruiting the catalytic subunit pan2 to mRNA via its interaction with RNA and with pab1. The sequence is that of PAN2-PAN3 deadenylation complex subunit pan3 (ppk26) from Schizosaccharomyces pombe (strain 972 / ATCC 24843) (Fission yeast).